A 1304-amino-acid chain; its full sequence is Angiotensin-converting enzyme (1304 aa).

A signal peptide spans 1-27 (MGAASGRRGPGLLLPLLLLLPPQPALA). Residues 28-1257 (LDPGLQPGNF…LDAQQARVGQ (1230 aa)) lie on the Extracellular side of the membrane. N-linked (GlcNAc...) asparagine glycosylation is found at N36, N52, N72, N109, N144, and N158. 2 Peptidase M2 domains span residues 38–622 (SADE…LGWP) and 641–1220 (VTDE…LGWP). C155 and C163 are joined by a disulfide. Y229 lines the chloride pocket. N-linked (GlcNAc...) asparagine glycosylation occurs at N316. C357 and C375 are disulfide-bonded. Residue H388 participates in Zn(2+) binding. E389 acts as the Proton acceptor 1 in catalysis. The Zn(2+) site is built by H392 and E416. N-linked (GlcNAc...) asparagine glycans are attached at residues N440, N443, and N507. The active-site Proton donor 1 is the H518. R527 contributes to the chloride binding site. A disulfide bridge connects residues C543 and C555. A glycan (N-linked (GlcNAc...) asparagine) is linked at N675. N-linked (GlcNAc...) (complex) asparagine glycosylation is found at N693 and N712. An intrachain disulfide couples C755 to C761. N758 carries N-linked (GlcNAc...) asparagine glycosylation. 2 residues coordinate chloride: R789 and Y827. N940 carries N-linked (GlcNAc...) asparagine glycosylation. C955 and C973 are oxidised to a cystine. H986 provides a ligand contact to Zn(2+). The active-site Proton acceptor 2 is E987. 2 residues coordinate Zn(2+): H990 and E1014. Chloride contacts are provided by W1088 and R1092. H1116 acts as the Proton donor 2 in catalysis. R1125 contributes to the chloride binding site. An intrachain disulfide couples C1141 to C1153. N-linked (GlcNAc...) asparagine glycosylation occurs at N1189. A juxtamembrane stalk region spans residues 1213–1254 (HGEKLGWPQYNWTPNSARSEGPLPDSGRVSFLGLDLDAQQAR). Residues 1258–1274 (WLLLFLGIALLVATLGL) form a helical membrane-spanning segment. Residues 1275–1304 (SQRLFSIRHRSLHRHSHGPQFDSEVELRHS) are Cytoplasmic-facing. S1297 bears the Phosphoserine mark.

The protein belongs to the peptidase M2 family. Monomer and homodimer; homodimerizes following binding to an inhibitor. Interacts with calmodulin (CALM1, CALM2 or CALM3); interaction takes place in the cytoplasmic region and regulates phosphorylation and proteolytic cleavage. It depends on Zn(2+) as a cofactor. Chloride is required as a cofactor. Post-translationally, produced following proteolytic cleavage by secretase enzymes that cleave the transmembrane form in the juxtamembrane stalk region upstream of the transmembrane region. Cleavage can take place at different sites of the juxtamembrane stalk region. In terms of processing, phosphorylated by CK2 on Ser-1297; which allows membrane retention. Phosphorylated on tyrosine residues on its extracellular part, promoting cleavage by secretase enzymes and formation of the soluble form (Angiotensin-converting enzyme, soluble form).

Its subcellular location is the cell membrane. The protein localises to the cytoplasm. It is found in the secreted. The catalysed reaction is Release of a C-terminal dipeptide, oligopeptide-|-Xaa-Yaa, when Xaa is not Pro, and Yaa is neither Asp nor Glu. Thus, conversion of angiotensin I to angiotensin II, with increase in vasoconstrictor activity, but no action on angiotensin II.. The enzyme catalyses angiotensin I + H2O = L-histidyl-L-leucine + angiotensin II. It carries out the reaction bradykinin + H2O = L-Phe-L-Arg + bradykinin(1-7). It catalyses the reaction substance P + H2O = substance P(1-9) + L-Leu-L-Met-NH2. The catalysed reaction is substance P + H2O = substance P(1-8) + Gly-L-Leu-L-Met-NH2. The enzyme catalyses substance P + H2O = L-Phe-L-Phe-Gly-L-Leu-L-Met-NH2 + substance P(1-6). It carries out the reaction neurotensin + H2O = neurotensin(1-11) + L-isoleucyl-L-leucine. It catalyses the reaction goralatide + H2O = N-acetyl-L-seryl-L-aspartate + L-lysyl-L-proline. The catalysed reaction is Met-enkephalin + H2O = L-phenylalanyl-L-methionine + L-tyrosylglycylglycine. The enzyme catalyses Leu-enkephalin + H2O = L-tyrosylglycylglycine + L-phenylalanyl-L-leucine. It carries out the reaction Met-enkephalin-Arg-Phe + H2O = L-arginyl-L-phenylalanine + Met-enkephalin. With respect to regulation, the dipeptidyl carboxypeptidase activity is strongly activated by chloride. The dipeptidyl carboxypeptidase activity is specifically inhibited by lisinopril, captopril and enalaprilat. Strongly inhibited by lisinopril and captopril. In terms of biological role, dipeptidyl carboxypeptidase that removes dipeptides from the C-terminus of a variety of circulating hormones, such as angiotensin I, bradykinin or enkephalins, thereby playing a key role in the regulation of blood pressure, electrolyte homeostasis or synaptic plasticity. Composed of two similar catalytic domains, each possessing a functional active site, with different selectivity for substrates. Plays a major role in the angiotensin-renin system that regulates blood pressure and sodium retention by the kidney by converting angiotensin I to angiotensin II, resulting in an increase of the vasoconstrictor activity of angiotensin. Also able to inactivate bradykinin, a potent vasodilator, and therefore enhance the blood pressure response. Acts as a regulator of synaptic transmission by mediating cleavage of neuropeptide hormones, such as substance P, neurotensin or enkephalins. Catalyzes degradation of different enkephalin neuropeptides (Met-enkephalin, Leu-enkephalin, Met-enkephalin-Arg-Phe and possibly Met-enkephalin-Arg-Gly-Leu). Acts as a regulator of synaptic plasticity in the nucleus accumbens of the brain by mediating cleavage of Met-enkephalin-Arg-Phe, a strong ligand of Mu-type opioid receptor OPRM1, into Met-enkephalin. Met-enkephalin-Arg-Phe cleavage by ACE decreases activation of OPRM1, leading to long-term synaptic potentiation of glutamate release. Also acts as a regulator of hematopoietic stem cell differentiation by mediating degradation of hemoregulatory peptide N-acetyl-SDKP (AcSDKP). Acts as a regulator of cannabinoid signaling pathway by mediating degradation of hemopressin, an antagonist peptide of the cannabinoid receptor CNR1. Involved in amyloid-beta metabolism by catalyzing degradation of Amyloid-beta protein 40 and Amyloid-beta protein 42 peptides, thereby preventing plaque formation. Catalyzes cleavage of cholecystokinin (maturation of Cholecystokinin-8 and Cholecystokinin-5) and Gonadoliberin-1 (both maturation and degradation) hormones. Degradation of hemoregulatory peptide N-acetyl-SDKP (AcSDKP) and amyloid-beta proteins is mediated by the N-terminal catalytic domain, while angiotensin I and cholecystokinin cleavage is mediated by the C-terminal catalytic region. Functionally, soluble form that is released in blood plasma and other body fluids following proteolytic cleavage in the juxtamembrane stalk region. Isoform produced by alternative promoter usage that is specifically expressed in spermatocytes and adult testis, and which is required for male fertility. In contrast to somatic isoforms, only contains one catalytic domain. Acts as a dipeptidyl carboxypeptidase that removes dipeptides from the C-terminus of substrates. The identity of substrates that are needed for male fertility is unknown. May also have a glycosidase activity which releases GPI-anchored proteins from the membrane by cleaving the mannose linkage in the GPI moiety. The GPIase activity was reported to be essential for the egg-binding ability of the sperm. This activity is however unclear and has been challenged by other groups, suggesting that it may be indirect. In Pan troglodytes (Chimpanzee), this protein is Angiotensin-converting enzyme.